A 313-amino-acid chain; its full sequence is D-alanine--D-alanine ligase (313 aa).

Residues 104 to 304 (KQALVPHGIP…YSDLVEAIIA (201 aa)) form the ATP-grasp domain. 130-187 (PLPRPYVLKPVNEGSSVGVAIVTAEGNYGSPISAASKGPWQEFDQLLAEPFIRGRELT) contributes to the ATP binding site. The Mg(2+) site is built by aspartate 255, glutamate 271, and asparagine 273.

Belongs to the D-alanine--D-alanine ligase family. The cofactor is Mg(2+). Requires Mn(2+) as cofactor.

The protein resides in the cytoplasm. The catalysed reaction is 2 D-alanine + ATP = D-alanyl-D-alanine + ADP + phosphate + H(+). It functions in the pathway cell wall biogenesis; peptidoglycan biosynthesis. Functionally, cell wall formation. The protein is D-alanine--D-alanine ligase of Novosphingobium aromaticivorans (strain ATCC 700278 / DSM 12444 / CCUG 56034 / CIP 105152 / NBRC 16084 / F199).